A 301-amino-acid chain; its full sequence is UstYa family oxidase phomYd (301 aa).

A disordered region spans residues 1-26 (MEKFFSPSRHNYADLSPTDVPASEES). Residues 47 to 69 (VLVNRLLAASTVALVMVSLWLGW) traverse the membrane as a helical segment. 2 short sequence motifs (HXXHC) span residues 189 to 194 (THSVHC) and 218 to 222 (HTDHC). N275 carries N-linked (GlcNAc...) asparagine glycosylation.

Belongs to the ustYa family.

The protein localises to the membrane. It functions in the pathway mycotoxin biosynthesis. In terms of biological role, ustYa family oxidase; part of the gene cluster that mediates the biosynthesis of the phomopsins, a group of hexapeptide mycotoxins which infects lupins and causes lupinosis disease in livestock. Within the pathway, phomYd catalyzes the desaturation of the Asp moiety into 2,3-dehydroaspartic acid (dAsp). The pathway starts with the processing of the precursor phomA by several endopeptidases including kexin proteases as well as the cluster-specific S41 family peptidase phomP1 and the oligopeptidase phomG to produce 10 identical copies of the hexapeptide Tyr-Val-Ile-Pro-Ile-Asp. After being excised from the precursor peptide, the core peptides are cyclized and modified post-translationally by enzymes encoded within the gene cluster. The timing and order of proteolysis of the phomA precursor and PTMs are still unknown. Two tyrosinase-like enzymes, phomQ1 and phomQ2, catalyze the chlorination and hydroxylation of Tyr, respectively. PhomYb, is proposed to be involved in the construction of the macrocyclic structure. The other 4 ustYa family proteins may be involved in PTMs that generate the unique structure of phomopsin A. PhomYa is required for the hydroxylation of C-beta of Tyr. PhomYc, phomYd, and phomYe are responsible for the biosynthesis of 2,3-dehydroisoleucine (dIle), 2,3-dehydroaspartic acid (dAsp), and 3,4-dehydroproline (dPro), respectively. While dIle formation by phomYc is indispensable for the installation of dAsp by phomYd, the order of the other PTMs have not been elucidated yet. Most of the biosynthetic enzymes likely have broad substrate specificity, and thus, there might be a metabolic grid from a precursor to phomopsin A. The enzyme(s) responsible for the biosynthesis of 3,4-dehydrovaline (dVal) have also not been identified yet. Finally, phomM acts as an S-adenosylmethionine-dependent alpha-N-methyltransferase that catalyzes two successive N-methylation reactions, converting N-desmethyl-phomopsin A to phomopsin A and phomopsin A further to an N,N-dimethylated congener called phomopsin E. The chain is UstYa family oxidase phomYd from Diaporthe leptostromiformis (Lupinosis disease fungus).